We begin with the raw amino-acid sequence, 328 residues long: Putative P2Y purinoceptor 10 (328 aa).

At Met1–Thr27 the chain is on the extracellular side. Residues Asn4 and Asn14 are each glycosylated (N-linked (GlcNAc...) asparagine). Residues Thr28–Cys48 traverse the membrane as a helical segment. Topologically, residues Arg49 to Lys56 are cytoplasmic. A helical membrane pass occupies residues Ala57–Leu77. Over Arg78–Arg91 the chain is Extracellular. The chain crosses the membrane as a helical span at residues Ala92 to Leu112. Cys94 and Cys170 are disulfide-bonded. Over Thr113–Asp137 the chain is Cytoplasmic. The chain crosses the membrane as a helical span at residues Val138–Leu158. Residues Arg159–Val182 lie on the Extracellular side of the membrane. A helical transmembrane segment spans residues Val183–Ile203. The Cytoplasmic segment spans residues Ala204–Met233. A helical membrane pass occupies residues Val234 to Phe254. Residues Tyr255–Pro277 lie on the Extracellular side of the membrane. A helical transmembrane segment spans residues Phe278–Ala298. At Ser299 to Asn328 the chain is on the cytoplasmic side.

The protein belongs to the G-protein coupled receptor 1 family.

It localises to the cell membrane. Functionally, putative receptor for purines coupled to G-proteins. The protein is Putative P2Y purinoceptor 10 (P2ry10) of Mus musculus (Mouse).